The primary structure comprises 162 residues: Transcription elongation factor GreA (162 aa).

The stretch at 45–65 (NAEYHAAKERQLFIEARINEL) forms a coiled coil.

The protein belongs to the GreA/GreB family.

Functionally, necessary for efficient RNA polymerase transcription elongation past template-encoded arresting sites. The arresting sites in DNA have the property of trapping a certain fraction of elongating RNA polymerases that pass through, resulting in locked ternary complexes. Cleavage of the nascent transcript by cleavage factors such as GreA or GreB allows the resumption of elongation from the new 3'terminus. GreA releases sequences of 2 to 3 nucleotides. The polypeptide is Transcription elongation factor GreA (Wolinella succinogenes (strain ATCC 29543 / DSM 1740 / CCUG 13145 / JCM 31913 / LMG 7466 / NCTC 11488 / FDC 602W) (Vibrio succinogenes)).